The chain runs to 346 residues: Protein-glutamate methylesterase/protein-glutamine glutaminase (346 aa).

Positions 6–123 constitute a Response regulatory domain; sequence KVLVVDDSAF…SLDLEKVRDL (118 aa). 4-aspartylphosphate is present on aspartate 57. One can recognise a CheB-type methylesterase domain in the interval 155–346; it reads PFDKTIIVIG…ADSIVRQCKR (192 aa). Catalysis depends on residues serine 166, histidine 193, and aspartate 289.

The protein belongs to the CheB family. In terms of processing, phosphorylated by CheA. Phosphorylation of the N-terminal regulatory domain activates the methylesterase activity.

The protein localises to the cytoplasm. The enzyme catalyses [protein]-L-glutamate 5-O-methyl ester + H2O = L-glutamyl-[protein] + methanol + H(+). It catalyses the reaction L-glutaminyl-[protein] + H2O = L-glutamyl-[protein] + NH4(+). Its function is as follows. Involved in chemotaxis. Part of a chemotaxis signal transduction system that modulates chemotaxis in response to various stimuli. Catalyzes the demethylation of specific methylglutamate residues introduced into the chemoreceptors (methyl-accepting chemotaxis proteins or MCP) by CheR. Also mediates the irreversible deamidation of specific glutamine residues to glutamic acid. This is Protein-glutamate methylesterase/protein-glutamine glutaminase from Halalkalibacterium halodurans (strain ATCC BAA-125 / DSM 18197 / FERM 7344 / JCM 9153 / C-125) (Bacillus halodurans).